The following is a 65-amino-acid chain: Peptide ToAcP (65 aa).

Residues 1 to 24 form the signal peptide; it reads MKMKMIVVISILLIVFSLSSKAMS. The propeptide occupies 25–34; that stretch reads LEDEQESVQR. Position 58 is an alanine amide (A58). Residues 59–65 constitute a propeptide that is removed on maturation; that stretch reads GRFDPAV.

In terms of tissue distribution, expressed by the venom gland.

Its subcellular location is the secreted. Its function is as follows. Helical wheel projections predict no hydrophobic face, suggesting a non-amphipathic peptide. Does not show antifungal activity. The chain is Peptide ToAcP from Tityus obscurus (Amazonian scorpion).